A 282-amino-acid polypeptide reads, in one-letter code: Probable septum site-determining protein MinC (282 aa).

Residues 108-127 are disordered; sequence AAARSADEESANAAAAAPAA. Residues 118–127 show a composition bias toward low complexity; sequence ANAAAAAPAA.

The protein belongs to the MinC family. As to quaternary structure, interacts with MinD and FtsZ.

Cell division inhibitor that blocks the formation of polar Z ring septums. Rapidly oscillates between the poles of the cell to destabilize FtsZ filaments that have formed before they mature into polar Z rings. Prevents FtsZ polymerization. The polypeptide is Probable septum site-determining protein MinC (Paraburkholderia xenovorans (strain LB400)).